We begin with the raw amino-acid sequence, 208 residues long: Octanoyltransferase (208 aa).

Residues 30–208 enclose the BPL/LPL catalytic domain; the sequence is GTASEAVFIL…ILKQEFYKIF (179 aa). Residues 69 to 76, 142 to 144, and 155 to 157 each bind substrate; these read RGGKFTYH, SIG, and GVA. Catalysis depends on Cys-173, which acts as the Acyl-thioester intermediate.

Belongs to the LipB family.

Its subcellular location is the cytoplasm. The enzyme catalyses octanoyl-[ACP] + L-lysyl-[protein] = N(6)-octanoyl-L-lysyl-[protein] + holo-[ACP] + H(+). Its pathway is protein modification; protein lipoylation via endogenous pathway; protein N(6)-(lipoyl)lysine from octanoyl-[acyl-carrier-protein]: step 1/2. Catalyzes the transfer of endogenously produced octanoic acid from octanoyl-acyl-carrier-protein onto the lipoyl domains of lipoate-dependent enzymes. Lipoyl-ACP can also act as a substrate although octanoyl-ACP is likely to be the physiological substrate. The chain is Octanoyltransferase from Orientia tsutsugamushi (strain Ikeda) (Rickettsia tsutsugamushi).